Reading from the N-terminus, the 38-residue chain is MVEALLSGIVLGLIPITLAGLFVTAYLQYRRGDQLDIR.

A helical transmembrane segment spans residues 5–25 (LLSGIVLGLIPITLAGLFVTA).

This sequence belongs to the PetG family. The 4 large subunits of the cytochrome b6-f complex are cytochrome b6, subunit IV (17 kDa polypeptide, PetD), cytochrome f and the Rieske protein, while the 4 small subunits are PetG, PetL, PetM and PetN. The complex functions as a dimer.

It localises to the plastid. The protein localises to the chloroplast thylakoid membrane. Functionally, component of the cytochrome b6-f complex, which mediates electron transfer between photosystem II (PSII) and photosystem I (PSI), cyclic electron flow around PSI, and state transitions. PetG is required for either the stability or assembly of the cytochrome b6-f complex. The chain is Cytochrome b6-f complex subunit 5 from Adiantum capillus-veneris (Maidenhair fern).